Consider the following 349-residue polypeptide: Septin-2 (349 aa).

Residues 33 to 305 form the Septin-type G domain; the sequence is KGFEFTLMVV…ENFRSERLKR (273 aa). The interval 43–50 is G1 motif; it reads GESGLGKS. Residues 43 to 50, threonine 77, glycine 103, 182 to 190, glycine 240, and arginine 255 contribute to the GTP site; these read GESGLGKS and KADTLTLKE. The segment at 100–103 is G3 motif; the sequence is DTPG. Positions 181 to 184 are G4 motif; it reads AKAD. Residues 259 to 269 are important for dimerization; that stretch reads WGVVEVENPEH.

It belongs to the TRAFAC class TrmE-Era-EngA-EngB-Septin-like GTPase superfamily. Septin GTPase family. In terms of assembly, septins polymerize into heterooligomeric protein complexes that form filaments, and associate with cellular membranes, actin filaments and microtubules. GTPase activity is required for filament formation. Can form heterooligomers with other family members and form filaments.

It is found in the cytoplasm. Its subcellular location is the cytoskeleton. The protein localises to the spindle. The protein resides in the cleavage furrow. It localises to the midbody. It is found in the cell cortex. Its subcellular location is the cell projection. The protein localises to the cilium membrane. Its function is as follows. Filament-forming cytoskeletal GTPase. Required for normal organization of the actin cytoskeleton. Plays a role in the biogenesis of polarized columnar-shaped epithelium by maintaining polyglutamylated microtubules, thus facilitating efficient vesicle transport, and by impeding MAP4 binding to tubulin. Required for the progression through mitosis. Forms a scaffold at the midplane of the mitotic splindle required to maintain CENPE localization at kinetochores and consequently chromosome congression. During anaphase, may be required for chromosome segregation and spindle elongation. Plays a role in ciliogenesis and collective cell movements. In cilia, required for the integrity of the diffusion barrier at the base of the primary cilium that prevents diffusion of transmembrane proteins between the cilia and plasma membranes. This chain is Septin-2, found in Gallus gallus (Chicken).